Reading from the N-terminus, the 216-residue chain is DDB1- and CUL4-associated factor 16 (216 aa).

Residues 1–42 (MGPRNPSPDHLSESESEEEENISYLNESSGEEWDSSEEEDSM) form a disordered region. A compositionally biased stretch (acidic residues) spans 29–41 (SGEEWDSSEEEDS). At K61 the chain carries N6-acetyllysine.

As to quaternary structure, interacts with DDB1 and CUL4A.

It is found in the nucleus. It functions in the pathway protein modification; protein ubiquitination. In terms of biological role, functions as a substrate recognition component for CUL4-DDB1 E3 ubiquitin-protein ligase complex, which mediates ubiquitination and proteasome-dependent degradation of nuclear proteins. This is DDB1- and CUL4-associated factor 16 from Homo sapiens (Human).